The sequence spans 907 residues: Collagen alpha-2(I) chain (907 aa).

2 disordered regions span residues Gly-1–Gly-183 and Ile-199–Ser-907. The span at Ala-19–Gly-33 shows a compositional bias: basic and acidic residues. 3 stretches are compositionally biased toward low complexity: residues Val-101–Pro-130, Ala-155–Pro-169, and Pro-206–Val-221. The residue at position 260 (Asn-260) is a Deamidated asparagine. Pro-272 is subject to 4-hydroxyproline. Composition is skewed to low complexity over residues Pro-272–Pro-281, Pro-292–Pro-307, Pro-340–Pro-362, Pro-424–Pro-441, Glu-453–Arg-475, Ala-495–Ala-507, Val-535–Ala-555, and Asn-566–Ala-581. Over residues Gly-591–Gly-600 the composition is skewed to gly residues. Composition is skewed to low complexity over residues Ala-601 to Thr-611, Glu-664 to Ser-691, Glu-706 to Asn-745, Asn-756 to Pro-766, and Glu-783 to Pro-804. The segment covering Arg-808–Pro-819 has biased composition (basic and acidic residues). The span at Ala-892–Ser-907 shows a compositional bias: pro residues.

This sequence belongs to the fibrillar collagen family. As to quaternary structure, trimers of one alpha 2(I) and two alpha 1(I) chains. Interacts (via C-terminus) with TMEM131 (via PapD-L domain); the interaction is direct and is involved in assembly and TRAPPIII ER-to-Golgi transport complex-dependent secretion of collagen. Post-translationally, prolines at the third position of the tripeptide repeating unit (G-X-Y) are hydroxylated in some or all of the chains. As to expression, forms the fibrils of tendon, ligaments and bones. In bones, the fibrils are mineralized with calcium hydroxyapatite.

It localises to the secreted. Its subcellular location is the extracellular space. It is found in the extracellular matrix. In terms of biological role, type I collagen is a member of group I collagen (fibrillar forming collagen). This Macrauchenia sp protein is Collagen alpha-2(I) chain.